The primary structure comprises 161 residues: Nucleotide-binding protein Pcar_0033 (161 aa).

The protein belongs to the YajQ family.

Its function is as follows. Nucleotide-binding protein. The sequence is that of Nucleotide-binding protein Pcar_0033 from Syntrophotalea carbinolica (strain DSM 2380 / NBRC 103641 / GraBd1) (Pelobacter carbinolicus).